The chain runs to 516 residues: 2-isopropylmalate synthase (516 aa).

In terms of domain architecture, Pyruvate carboxyltransferase spans 8–270; it reads IYIFDTTLRD…YTGIKTESIY (263 aa). Residues Asp-17, His-205, His-207, and Asn-241 each contribute to the Mn(2+) site. The interval 394–516 is regulatory domain; sequence KLIYLNVVSG…DAGKIKSEYE (123 aa).

The protein belongs to the alpha-IPM synthase/homocitrate synthase family. LeuA type 1 subfamily. Homodimer. Requires Mn(2+) as cofactor.

It is found in the cytoplasm. It carries out the reaction 3-methyl-2-oxobutanoate + acetyl-CoA + H2O = (2S)-2-isopropylmalate + CoA + H(+). It participates in amino-acid biosynthesis; L-leucine biosynthesis; L-leucine from 3-methyl-2-oxobutanoate: step 1/4. Functionally, catalyzes the condensation of the acetyl group of acetyl-CoA with 3-methyl-2-oxobutanoate (2-ketoisovalerate) to form 3-carboxy-3-hydroxy-4-methylpentanoate (2-isopropylmalate). This chain is 2-isopropylmalate synthase, found in Syntrophus aciditrophicus (strain SB).